A 251-amino-acid polypeptide reads, in one-letter code: CDP-diacylglycerol pyrophosphatase (251 aa).

A helical membrane pass occupies residues 5–25; that stretch reads GYFLLAVIVIVAAAGVGYWKF.

This sequence belongs to the Cdh family.

The protein resides in the cell inner membrane. The enzyme catalyses a CDP-1,2-diacyl-sn-glycerol + H2O = a 1,2-diacyl-sn-glycero-3-phosphate + CMP + 2 H(+). It functions in the pathway phospholipid metabolism; CDP-diacylglycerol degradation; phosphatidate from CDP-diacylglycerol: step 1/1. In Salmonella paratyphi A (strain ATCC 9150 / SARB42), this protein is CDP-diacylglycerol pyrophosphatase.